The chain runs to 99 residues: Large ribosomal subunit protein eL21 (99 aa).

Belongs to the eukaryotic ribosomal protein eL21 family.

The protein is Large ribosomal subunit protein eL21 of Ignicoccus hospitalis (strain KIN4/I / DSM 18386 / JCM 14125).